Consider the following 947-residue polypeptide: Bromodomain testis-specific protein (947 aa).

The 107-residue stretch at 27-133 folds into the Bromo 1 domain; sequence RLTNQLQYLQ…KLFMQKLSQM (107 aa). Asn-109 lines the JQ1 pocket. Ser-187 bears the Phosphoserine mark. Residues 202 to 228 are disordered; it reads QTAAQVTKGVKRKADTTTPATSAVKAS. The short motif at 209-220 is the Nuclear localization signal element; sequence KGVKRKADTTTP. Over residues 217–228 the composition is skewed to polar residues; that stretch reads TTTPATSAVKAS. One can recognise a Bromo 2 domain in the interval 267–376; sequence VKVTEQLRHC…DVFETHFSKI (110 aa). Disordered regions lie at residues 395-420, 444-511, 610-698, and 882-924; these read ETTGRENTNEASSEGNSSDDSEDERV, PFRK…KPMN, NNQL…IPPE, and NKCS…RRRE. A coiled-coil region spans residues 417-470; the sequence is DERVKRLAKLQEQLKAVHQQLQVLSQVPFRKLNKKKEKSKKEKKKEKVNNSNEN. Basic residues predominate over residues 447–462; the sequence is KLNKKKEKSKKEKKKE. Residues 470-481 show a composition bias toward basic and acidic residues; sequence NPRKMCEQMRLK. The span at 482–494 shows a compositional bias: basic residues; sequence EKSKRNQPKKRKQ. Positions 500–582 constitute an NET domain; sequence KSEDEDNAKP…ACLRKRPLKP (83 aa). Residues 591-621 are a coiled coil; the sequence is KEELHSQKKQELEKRLLDVNNQLNSRKRQTK. Residues 637–662 are compositionally biased toward low complexity; sequence LSESSSSSSSSSESESSSSDLSSSDS. Basic and acidic residues-rich tracts occupy residues 674–692 and 885–924; these read TEVKPNDSPSKENVKKMKN and SGEEQKEHQQSSEAQDKSKLWLLKDRDLARQKEQERRRRE.

It belongs to the BET family. Interacts with mRNA splicing machinery proteins SRSF2, DDX5, HNRNPK and TARDBP. Interacts with the acetylated N-terminus of histone H1, H2, H3 and H4. Interacts with P-TEFb components CDK9 and CCNT1/cyclin-T1. Interacts with SMARCE1. Interacts with the acetylated N-terminus of histone H1.4, H2A, H2B, H3 and H4. Post-translationally, ubiquitinated in a SPOP-dependent manner, leading to proteasomal degradation. Testis-specific. A 3-fold higher expression is seen in adult testis than in embryo testis. Expression seems to be correlated with histone H4 hyperacetylation during the haploid phase of spermatogenesis (spermiogenesis). No expression, or very low expression is seen in patients' testes with abnormal spermatogenesis. Expressed in cancers such as non-small cell lung cancer and squamous cell carcinomas of the head and neck as well as of esophagus, but not in melanoma or in cancers of the colon, breast, kidney and bladder.

The protein resides in the nucleus. Its function is as follows. Testis-specific chromatin protein that specifically binds histone H4 acetylated at 'Lys-5' and 'Lys-8' (H4K5ac and H4K8ac, respectively) and plays a key role in spermatogenesis. Required in late pachytene spermatocytes: plays a role in meiotic and post-meiotic cells by binding to acetylated histones at the promoter of specific meiotic and post-meiotic genes, facilitating their activation at the appropriate time. In the post-meiotic phase of spermatogenesis, binds to hyperacetylated histones and participates in their general removal from DNA. Also recognizes and binds a subset of butyrylated histones: able to bind histone H4 butyrylated at 'Lys-8' (H4K8ac), while it is not able to bind H4 butyrylated at 'Lys-5' (H4K5ac). Also acts as a component of the splicing machinery in pachytene spermatocytes and round spermatids and participates in 3'-UTR truncation of specific mRNAs in post-meiotic spermatids. Required for chromocenter organization, a structure comprised of peri-centromeric heterochromatin. This is Bromodomain testis-specific protein (BRDT) from Homo sapiens (Human).